The chain runs to 768 residues: Protein transport protein Sec23A (768 aa).

At T2 the chain carries N-acetylthreonine. Residues C61, C66, C85, and C88 each contribute to the Zn(2+) site. Position 308 is a phosphothreonine (T308). The Gelsolin-like repeat unit spans residues 632–718; the sequence is PEPVLLDSSS…EHGGSQARFL (87 aa).

The protein belongs to the SEC23/SEC24 family. SEC23 subfamily. In terms of assembly, COPII is composed of at least five proteins: the Sec23/24 complex, the Sec13/31 complex and Sar1. Interacts with SEC23IP. Interacts with HTR4. Interacts with SEC16A. Interacts with SLC6A4. Interacts (as part of the Sec23/24 complex) with SEC22B; recruits SEC22B into COPII-coated vesicles and allows the transport of this cargo from the endoplasmic reticulum to the Golgi. Interacts (via Gelsolin-like repeat) with MIA2 and MIA3; specifically involved in the transport of large cargos like the collagen COL7A1. Interacts with DDHD1. Interacts with TMEM39A. Interacts with SACM1L; this interaction is reduced in the absence of TMEM39A. Interacts with kinase FAM20C; transport of FAM20C from the endoplasmic reticulum to the Golgi is likely to be mediated by COPII vesicles.

The protein localises to the cytoplasmic vesicle. Its subcellular location is the COPII-coated vesicle membrane. The protein resides in the endoplasmic reticulum membrane. It is found in the cytoplasm. It localises to the cytosol. Functionally, component of the coat protein complex II (COPII) which promotes the formation of transport vesicles from the endoplasmic reticulum (ER). The coat has two main functions, the physical deformation of the endoplasmic reticulum membrane into vesicles and the selection of cargo molecules for their transport to the Golgi complex. Required for the translocation of insulin-induced glucose transporter SLC2A4/GLUT4 to the cell membrane. The polypeptide is Protein transport protein Sec23A (Bos taurus (Bovine)).